The sequence spans 572 residues: Adenine deaminase (572 aa).

This sequence belongs to the metallo-dependent hydrolases superfamily. Adenine deaminase family. Requires Mn(2+) as cofactor.

The catalysed reaction is adenine + H2O + H(+) = hypoxanthine + NH4(+). This is Adenine deaminase from Clostridium perfringens (strain 13 / Type A).